Reading from the N-terminus, the 601-residue chain is Probable N-acetylgalactosaminyltransferase 7 (601 aa).

Residues 1–20 (MIIARKKLQLQRLWRQRGCR) lie on the Cytoplasmic side of the membrane. Residues 21-38 (VATYICLGVLVLFGFVYN) traverse the membrane as a helical; Signal-anchor for type II membrane protein segment. Residues 39–601 (SKGNSMSSIK…FVWKEFYQSS (563 aa)) are Lumenal-facing. Residues 61–108 (DLTNKELPGGPDPNTIFRGSELGNYEPKEPEIPSNQPGEHGKPVPVTD) form a disordered region. N-linked (GlcNAc...) asparagine glycosylation is present at Asn135. Disulfide bonds link Cys146/Cys382, Cys373/Cys452, Cys490/Cys506, Cys529/Cys542, and Cys568/Cys583. The catalytic subdomain A stretch occupies residues 155 to 265 (LPTVSVVVVF…TNWLPPLLAP (111 aa)). Substrate contacts are provided by Asp196 and Arg226. Asp249 and His251 together coordinate Mn(2+). The catalytic subdomain B stretch occupies residues 328 to 390 (PFRSPTHAGG…PCSHVGHVYR (63 aa)). A substrate-binding site is contributed by Trp359. His387 is a Mn(2+) binding site. Residues Arg390 and Tyr395 each coordinate substrate. Residues 477–595 (DVWGEARNPA…DNERQKFVWK (119 aa)) enclose the Ricin B-type lectin domain.

This sequence belongs to the glycosyltransferase 2 family. GalNAc-T subfamily. It depends on Mn(2+) as a cofactor.

It is found in the golgi apparatus membrane. The protein operates within protein modification; protein glycosylation. Its function is as follows. Probable glycopeptide transferase involved in O-linked oligosaccharide biosynthesis. Glycopeptide transferases catalyze the transfer of an N-acetyl-D-galactosamine residue to an already glycosylated peptide. In contrast to other members of the family, it does not act as a peptide transferase that transfers GalNAc onto serine or threonine residue on peptides that have been tested. Some peptide transferase activity is however not excluded, considering that its appropriate peptide substrate may remain unidentified. The polypeptide is Probable N-acetylgalactosaminyltransferase 7 (gly-7) (Caenorhabditis elegans).